The chain runs to 645 residues: Putative palmitoyltransferase ZDHHC13 (645 aa).

The disordered stretch occupies residues 1–73 (MDWSEGDGSH…KSSHPEDSSS (73 aa)). Residues 1–314 (MDWSEGDGSH…ACLKLLNRYK (314 aa)) lie on the Cytoplasmic side of the membrane. Positions 7–20 (DGSHSHGHMGDSCH) are enriched in basic and acidic residues. Residues 23–33 (GGGHSHGHGHS) are compositionally biased toward basic residues. The segment covering 34-43 (HGGSGFGGFM) has biased composition (gly residues). 5 ANK repeats span residues 104-133 (ENVT…VIDQ), 138-167 (LNST…DPSL), 171-200 (EGYR…EVDL), 204-234 (NGQT…SVNA), and 239-268 (NRNS…SVDM). Residues 315 to 335 (VCLQSVFSVVVVGAFGAILDM) traverse the membrane as a helical segment. Residue Arg336 is a topological domain, lumenal. Residues 337-357 (TESWLLKGILLACIMAVINLA) traverse the membrane as a helical segment. The Cytoplasmic portion of the chain corresponds to 358-369 (SRQLATVAVRSL). A helical transmembrane segment spans residues 370–390 (IPSTGLIASVFWMVVTWVLWF). The Lumenal segment spans residues 391-394 (LPDE). The chain crosses the membrane as a helical span at residues 395–415 (PSAAVQMLFTVNITAVLYYYI). Over 416 to 492 (RSCRTDPGHV…NGCIGARNHP (77 aa)) the chain is Cytoplasmic. Residues 449-499 (IFCTSCMMRKPMRANHCFSCNACVAKQDHHSIWINGCIGARNHPFFVLFLV) enclose the DHHC domain. The helical transmembrane segment at 493-513 (FFVLFLVALNFLCIWMFYGSI) threads the bilayer. The Lumenal portion of the chain corresponds to 514–542 (TYWSRHCPLHYSEEGIWGALTALMGCSPW). A helical membrane pass occupies residues 543 to 563 (LLYVFCFVFFHTTWASILLVL). Over 564–645 (QLYQIAFLGL…RDMFSSPDAV (82 aa)) the chain is Cytoplasmic.

It belongs to the DHHC palmitoyltransferase family. AKR/ZDHHC17 subfamily.

The protein resides in the golgi apparatus membrane. The protein localises to the cytoplasmic vesicle membrane. In terms of biological role, putative palmitoyltransferase that could catalyze the addition of palmitate onto various protein substrates. This Danio rerio (Zebrafish) protein is Putative palmitoyltransferase ZDHHC13.